We begin with the raw amino-acid sequence, 464 residues long: MNKTIRTRYAPSPTGYLHIGGARTALFCYLFAKHSNGDFIFRLEDTDVERNVEGGEASQLNNLAWLGIVPDESPLKPNPKYGKYRQSEKLAIYQAYIDELIKQGLAYKAYDSSEELAKQHEEQEKAGVASFRYDPTWLKLSESEIKRRDEAKEYSIRLKLPKNKNYSWDDLVRGPISVNSDDIGDFVIMKSDGYPTYNFAVVVDDHQMDITHVLRGEEHITNTPKQLAIYEAFGWDNPVFGHLTIITNMEGKKLSKRDKSLKQFIEDYKNEGYCPEAIFNFLALLGWTSGDKTEIMSHDELIKKFDYNRLSKSPSKFDIVKMEWFSKQYMKKLPNEVIIEKINSPKDAQWNNLFVETYKQQAATISEIKENLKIYLFPKEKLELQIDNDLVVKTFFAHLKAKDFTIENIQAAIDETKNALNVKGKDLFMPIRITATYEEHGPELAKAIYLFGKDLVYKRLTKWS.

A 'HIGH' region motif is present at residues 11 to 21; sequence PSPTGYLHIGG. Positions 253–257 match the 'KMSKS' region motif; sequence KLSKR. Residue Lys256 coordinates ATP.

Belongs to the class-I aminoacyl-tRNA synthetase family. Glutamate--tRNA ligase type 1 subfamily. As to quaternary structure, monomer.

The protein localises to the cytoplasm. It carries out the reaction tRNA(Glu) + L-glutamate + ATP = L-glutamyl-tRNA(Glu) + AMP + diphosphate. Its function is as follows. Catalyzes the attachment of glutamate to tRNA(Glu) in a two-step reaction: glutamate is first activated by ATP to form Glu-AMP and then transferred to the acceptor end of tRNA(Glu). The sequence is that of Glutamate--tRNA ligase from Metamycoplasma arthritidis (strain 158L3-1) (Mycoplasma arthritidis).